Reading from the N-terminus, the 316-residue chain is Apolipoprotein E (316 aa).

The signal sequence occupies residues 1–18 (MKALWAVLVVTLLAGCLA). Tandem repeats lie at residues 76 to 97 (VLME…EQLG), 98 to 119 (PMAE…SRLG), 120 to 141 (ADME…TMLG), 142 to 163 (QSTE…KRLM), 164 to 185 (RDAE…EGAE), 186 to 207 (RGVG…QRTA), 208 to 229 (NLGA…ARIR), and 230 to 251 (GRLE…EQME). Positions 76–251 (VLMEDTMTEL…RLEEVREQME (176 aa)) are 8 X 22 AA approximate tandem repeats. Residue M139 is modified to Methionine sulfoxide. At S143 the chain carries Phosphoserine. The interval 154-164 (HLRKLRKRLMR) is LDL and other lipoprotein receptors binding. A heparin-binding site is contributed by 158 to 161 (LRKR). The segment at 206–286 (TANLGAGAGK…GWFEPLVEDM (81 aa)) is lipid-binding and lipoprotein association. Residue 225–232 (GARIRGRL) coordinates heparin. Positions 262–316 (QQMRLQAEIFQARLKGWFEPLVEDMQRQWANLVEKIQASVAANPIPPSSVPQESQ) are homooligomerization. The interval 274–286 (RLKGWFEPLVEDM) is specificity for association with VLDL.

This sequence belongs to the apolipoprotein A1/A4/E family. In terms of assembly, homotetramer. May interact with ABCA1; functionally associated with ABCA1 in the biogenesis of HDLs. May interact with APP/A4 amyloid-beta peptide; the interaction is extremely stable in vitro but its physiological significance is unclear. May interact with MAPT. May interact with MAP2. In the cerebrospinal fluid, interacts with secreted SORL1. Interacts with PMEL; this allows the loading of PMEL luminal fragment on ILVs to induce fibril nucleation. Post-translationally, APOE exists as multiple glycosylated and sialylated glycoforms within cells and in plasma. The extent of glycosylation and sialylation are tissue and context specific. In terms of processing, glycated in plasma VLDL. Phosphorylated by FAM20C in the extracellular medium.

The protein localises to the secreted. It localises to the extracellular space. It is found in the extracellular matrix. The protein resides in the extracellular vesicle. Its subcellular location is the endosome. The protein localises to the multivesicular body. APOE is an apolipoprotein, a protein associating with lipid particles, that mainly functions in lipoprotein-mediated lipid transport between organs via the plasma and interstitial fluids. APOE is a core component of plasma lipoproteins and is involved in their production, conversion and clearance. Apolipoproteins are amphipathic molecules that interact both with lipids of the lipoprotein particle core and the aqueous environment of the plasma. As such, APOE associates with chylomicrons, chylomicron remnants, very low density lipoproteins (VLDL) and intermediate density lipoproteins (IDL) but shows a preferential binding to high-density lipoproteins (HDL). It also binds a wide range of cellular receptors including the LDL receptor/LDLR, the LDL receptor-related proteins LRP1, LRP2 and LRP8 and the very low-density lipoprotein receptor/VLDLR that mediate the cellular uptake of the APOE-containing lipoprotein particles. Finally, APOE also has a heparin-binding activity and binds heparan-sulfate proteoglycans on the surface of cells, a property that supports the capture and the receptor-mediated uptake of APOE-containing lipoproteins by cells. A main function of APOE is to mediate lipoprotein clearance through the uptake of chylomicrons, VLDLs, and HDLs by hepatocytes. APOE is also involved in the biosynthesis by the liver of VLDLs as well as their uptake by peripheral tissues ensuring the delivery of triglycerides and energy storage in muscle, heart and adipose tissues. By participating in the lipoprotein-mediated distribution of lipids among tissues, APOE plays a critical role in plasma and tissues lipid homeostasis. APOE is also involved in two steps of reverse cholesterol transport, the HDLs-mediated transport of cholesterol from peripheral tissues to the liver, and thereby plays an important role in cholesterol homeostasis. First, it is functionally associated with ABCA1 in the biogenesis of HDLs in tissues. Second, it is enriched in circulating HDLs and mediates their uptake by hepatocytes. APOE also plays an important role in lipid transport in the central nervous system, regulating neuron survival and sprouting. The polypeptide is Apolipoprotein E (Apoe) (Onychomys torridus (Southern grasshopper mouse)).